Here is a 305-residue protein sequence, read N- to C-terminus: tRNA pseudouridine synthase B (305 aa).

Aspartate 48 serves as the catalytic Nucleophile.

The protein belongs to the pseudouridine synthase TruB family. Type 1 subfamily.

It carries out the reaction uridine(55) in tRNA = pseudouridine(55) in tRNA. In terms of biological role, responsible for synthesis of pseudouridine from uracil-55 in the psi GC loop of transfer RNAs. The chain is tRNA pseudouridine synthase B from Pseudomonas syringae pv. syringae (strain B728a).